An 87-amino-acid chain; its full sequence is UPF0473 protein Daud_0916 (87 aa).

Belongs to the UPF0473 family.

The polypeptide is UPF0473 protein Daud_0916 (Desulforudis audaxviator (strain MP104C)).